Reading from the N-terminus, the 137-residue chain is Small ribosomal subunit protein uS11 (137 aa).

The tract at residues 116–137 (EDVTPIPHDGTRPKGGRRGRRV) is disordered.

This sequence belongs to the universal ribosomal protein uS11 family. As to quaternary structure, part of the 30S ribosomal subunit.

Functionally, located on the platform of the 30S subunit. In Pyrococcus abyssi (strain GE5 / Orsay), this protein is Small ribosomal subunit protein uS11.